A 216-amino-acid chain; its full sequence is UPF0502 protein Pmen_2627 (216 aa).

This sequence belongs to the UPF0502 family.

This chain is UPF0502 protein Pmen_2627, found in Ectopseudomonas mendocina (strain ymp) (Pseudomonas mendocina).